The sequence spans 551 residues: Glucans biosynthesis protein D (551 aa).

The segment at residues 1–32 (MNRRRFIKGSMAMAAVCGSSGIASLFSQAAFA) is a signal peptide (tat-type signal).

Belongs to the OpgD/OpgG family. In terms of processing, predicted to be exported by the Tat system. The position of the signal peptide cleavage has not been experimentally proven.

Its subcellular location is the periplasm. The protein operates within glycan metabolism; osmoregulated periplasmic glucan (OPG) biosynthesis. Functionally, probably involved in the control of the structural glucose backbone of osmoregulated periplasmic glucans (OPGs). The protein is Glucans biosynthesis protein D of Salmonella enteritidis PT4 (strain P125109).